Reading from the N-terminus, the 626-residue chain is MQANLQWLDDPEVFRVNQLPAHSDHHYYHDTAEFKTGSRFIKSLNGAWRFNFAKTPAERPVDFYQPDFDATDFDTIQVPGHIELAGYGQIQYINTLYPWEGKIYRRPPYTLNQDQLTPGLFSDAADNTVGSYLKTFDLDDVFKGQRIIIQFQGVEEALYVWLNGHFIGYSEDSFTPSEFDLTPYIQDQGNVLAVRVYKHSTAAFIEDQDMFRFSGIFRDVNILAEPASHITDLDIRPVPNANLKSGELNITTKVTGEPATLALTVKDHDGRVLTSQTQTGSGSVTFDTMLFDQLHLWSPQTPYLYQLTIEVYDADHQLLEVVPYQFGFRTVELRDDKVIYVNNKRLVINGVNRHEWNAHTGRVISMADMRADIQTMLANNINADRTCHYPDQLPWYQLCDEAGIYLMAETNLESHGSWQKMGAIEPSYNVPGDNPHWPAAVIDRARSNYEWFKNHPSIIFWSLGNESYAGEDIAAMQAFYKEHDDSRLVHYEGVFYTPELKDRISDVESRMYEKPQNIVAYLEDNPTKPFLNCEYMHDMGNSLGGMQSYNDLIDKYPMYQGGFIWDFIDQALFVHDPITDQDVLRYGGDFDERHSDYAFSGNGLMFADRTPKPAMQEVKYYYGLHK.

E466 acts as the Proton donor in catalysis. E534 acts as the Nucleophile in catalysis.

The protein belongs to the glycosyl hydrolase 2 family. In terms of assembly, heterodimer of a large (LacL) and a small subunit (LacM).

The enzyme catalyses Hydrolysis of terminal non-reducing beta-D-galactose residues in beta-D-galactosides.. In terms of biological role, component of a beta-galactosidase that displays activity with the artificial chromogenic substrate o-nitrophenyl-beta-D-galactopyranoside (ONPG). This is Beta-galactosidase large subunit from Leuconostoc lactis.